The primary structure comprises 91 residues: Small ribosomal subunit protein uS17 (91 aa).

It belongs to the universal ribosomal protein uS17 family. As to quaternary structure, part of the 30S ribosomal subunit.

One of the primary rRNA binding proteins, it binds specifically to the 5'-end of 16S ribosomal RNA. The chain is Small ribosomal subunit protein uS17 from Acidithiobacillus ferrooxidans (strain ATCC 23270 / DSM 14882 / CIP 104768 / NCIMB 8455) (Ferrobacillus ferrooxidans (strain ATCC 23270)).